A 53-amino-acid polypeptide reads, in one-letter code: UPF0391 membrane protein Acid_3618 (53 aa).

2 consecutive transmembrane segments (helical) span residues 6-26 (LVFL…LAGA) and 28-48 (VGIA…AFLM).

Belongs to the UPF0391 family.

It is found in the cell membrane. In Solibacter usitatus (strain Ellin6076), this protein is UPF0391 membrane protein Acid_3618.